The chain runs to 91 residues: Probable Fe(2+)-trafficking protein (91 aa).

The protein belongs to the Fe(2+)-trafficking protein family.

Could be a mediator in iron transactions between iron acquisition and iron-requiring processes, such as synthesis and/or repair of Fe-S clusters in biosynthetic enzymes. The sequence is that of Probable Fe(2+)-trafficking protein from Tolumonas auensis (strain DSM 9187 / NBRC 110442 / TA 4).